The sequence spans 422 residues: Serine--tRNA ligase (422 aa).

229–231 is an L-serine binding site; the sequence is TAE. Position 260–262 (260–262) interacts with ATP; the sequence is RKE. Glu283 contacts L-serine. 347–350 contacts ATP; that stretch reads EISS. Ser383 is a binding site for L-serine.

The protein belongs to the class-II aminoacyl-tRNA synthetase family. Type-1 seryl-tRNA synthetase subfamily. As to quaternary structure, homodimer. The tRNA molecule binds across the dimer.

The protein resides in the cytoplasm. The enzyme catalyses tRNA(Ser) + L-serine + ATP = L-seryl-tRNA(Ser) + AMP + diphosphate + H(+). It carries out the reaction tRNA(Sec) + L-serine + ATP = L-seryl-tRNA(Sec) + AMP + diphosphate + H(+). It functions in the pathway aminoacyl-tRNA biosynthesis; selenocysteinyl-tRNA(Sec) biosynthesis; L-seryl-tRNA(Sec) from L-serine and tRNA(Sec): step 1/1. Functionally, catalyzes the attachment of serine to tRNA(Ser). Is also able to aminoacylate tRNA(Sec) with serine, to form the misacylated tRNA L-seryl-tRNA(Sec), which will be further converted into selenocysteinyl-tRNA(Sec). The sequence is that of Serine--tRNA ligase from Citrifermentans bemidjiense (strain ATCC BAA-1014 / DSM 16622 / JCM 12645 / Bem) (Geobacter bemidjiensis).